A 340-amino-acid chain; its full sequence is TD and POZ domain-containing protein 5 (340 aa).

Positions 19 to 149 constitute an MATH domain; it reads EFCYVWTIRN…ENKLTLCCKV (131 aa). The BTB domain maps to 188 to 255; that stretch reads TDCCLLVAGH…IYTGKAPHLQ (68 aa).

Belongs to the Tdpoz family.

The sequence is that of TD and POZ domain-containing protein 5 from Mus musculus (Mouse).